The sequence spans 526 residues: Acid-sensing ion channel 1 (526 aa).

Topologically, residues 1–49 (MELKTEEEEVGGVQPVSIQAFASSSTLHGLAHIFSYERLSLKRALWALC) are cytoplasmic. A helical membrane pass occupies residues 50-66 (FLGSLAVLLCVCTERVQ). Over 67 to 425 (YYFCYHHVTK…ETIEQKKAYE (359 aa)) the chain is Extracellular. Disulfide bonds link C93–C194, C172–C179, C290–C365, C308–C361, C312–C359, C321–C343, and C323–C335. Residues N366 and N393 are each glycosylated (N-linked (GlcNAc...) asparagine). The discontinuously helical transmembrane segment at 426-456 (IAGLLGDIGGQMGLFIGASILTVLELFDYAY) threads the bilayer. The short motif at 442–444 (GAS) is the GAS motif; ion selectivity filter element. The Cytoplasmic portion of the chain corresponds to 457-526 (EVIKHRLCRR…ARGTFEDFTC (70 aa)). Phosphoserine is present on residues S477 and S497.

This sequence belongs to the amiloride-sensitive sodium channel (TC 1.A.6) family. ASIC1 subfamily. Homotrimer. Heterotrimer; with other ASIC proteins producing channel with different properties. Interacts with PICK1; regulates ASIC1 clustering in membranes. Interacts with STOM; alters heterotrimeric ASIC channels activity. PH-gating could be regulated by serine proteases. Post-translationally, phosphorylation by PKA regulates interaction with PICK1 and subcellular localization. Phosphorylation by PKC may regulate the channel. In terms of tissue distribution, expressed in dorsal root ganglia and sciatic nerve (at protein level). Widely distributed throughout the brain. Expressed in olfactory bulb, neo and allocortical regions, dentate granule cells, pyramidal cells of CA1-CA3 subfields of the hippocampal formation, habenula, basolateral amygdaloid nuclei, and in the Purkinje and granule cells of the cerebellum. Diffusely detected over most other regions of the basal ganglia, including thalamic nuclei, substantia nigra, striatum and globus pallidus, hypothalamus, midbrain, pons, medulla and choroid plexus. Expressed only in dorsal root ganglion (DRG). As to expression, expressed exclusively in trigeminal ganglion and dorsal root ganglion.

It is found in the cell membrane. Its subcellular location is the postsynaptic cell membrane. The protein resides in the cell projection. The protein localises to the dendrite. It carries out the reaction Na(+)(in) = Na(+)(out). It catalyses the reaction Li(+)(in) = Li(+)(out). The enzyme catalyses K(+)(in) = K(+)(out). The catalysed reaction is Ca(2+)(in) = Ca(2+)(out). It carries out the reaction H(+)(in) = H(+)(out). Inhibited by the diuretic drug amiloride. External calcium is required to potentiate proton activation of ASIC1 at physiological concentrations, but at higher, non-physiological concentrations, it inhibits activation. Also potentiated by other multivalent cations like Mg(2+), Ba(2+). Activated by FMRFamide-related neuropeptides. Inhibited by anti-inflammatory drugs like salicylic acid. The spider venom psalmotoxin-1 specifically inhibits the ASIC1 homotrimer. The snake venom mambalgin-1, mambalgin-2 and mambalgin-3 inhibit the homotrimer of Asic1a (ASIC1 isoform 1). The snake venom mambalgin-1 and mambalgin-2 inhibit heterotrimers of Asic1a-Asic1b (ASIC1 isoform 1-ASIC1 isoform 3). Heterotrimer of Asic1a-Asic2a is inhibited by the snake venom mambalgin-1, mambalgin-2 and mambalgin-3. Heterotrimer of Asic1a-Asic2b is inhibited by the snake venom mambalgin-1 and mambalgin-2. The spider venom Pi-theraphotoxin-Hm3a inhibits the homotrimer of Asic1a (ASIC1 isoform 1). The spider venom Pi-theraphotoxin-Hm3a inhibits heterotrimers of Asic1a-Asic1b (ASIC1 isoform 1-ASIC1 isoform 3). The spider venom Pi-hexatoxin-Hi1a inhibits the ASIC1 homotrimer. With respect to regulation, not inhibited by extracellular calcium. Functionally, forms voltage-independent, pH-gated trimeric sodium channels that act as postsynaptic excitatory receptors in the nervous system, playing a crucial role in regulating synaptic plasticity, learning, and memory. Upon extracellular pH drop this channel elicits transient, fast activating, and completely desensitizing inward currents. Displays high selectivity for sodium ions but can also permit the permeation of other cations. Regulates more or less directly intracellular calcium concentration and CaMKII phosphorylation, and thereby the density of dendritic spines. Modulates neuronal activity in the circuits underlying innate fear. Its function is as follows. Permeable to other cations including calcium, lithium and potassium. PH activation and steady-state inactivation are shifted to more acidic values. Forms channels that are not permeable to calcium as it discrimates stronger between monovalent cations. In terms of biological role, has no pH-gated sodium channel activity per se but can associate with other ASICs and regulate their pH-sensitivity. The sequence is that of Acid-sensing ion channel 1 from Rattus norvegicus (Rat).